The chain runs to 108 residues: Small ribosomal subunit protein uS17 (108 aa).

The tract at residues 1–26 (MREKMAEATETQASETSTRGRPKTRV) is disordered. A compositionally biased stretch (low complexity) spans 8–17 (ATETQASETS).

This sequence belongs to the universal ribosomal protein uS17 family. Part of the 30S ribosomal subunit.

Functionally, one of the primary rRNA binding proteins, it binds specifically to the 5'-end of 16S ribosomal RNA. This is Small ribosomal subunit protein uS17 from Myxococcus xanthus (strain DK1622).